Reading from the N-terminus, the 231-residue chain is Glutathione-S-transferase (231 aa).

The GST N-terminal domain maps to 15–98 (LFAVKGTATS…YIADAYDKDG (84 aa)).

This sequence belongs to the GST superfamily.

The catalysed reaction is RX + glutathione = an S-substituted glutathione + a halide anion + H(+). Conjugation of reduced glutathione to a wide number of exogenous and endogenous hydrophobic electrophiles. The chain is Glutathione-S-transferase from Alternaria alternata (Alternaria rot fungus).